The sequence spans 214 residues: dITP/XTP pyrophosphatase (214 aa).

13-18 is a binding site for substrate; sequence SHNAGK. Asp-45 and Asp-74 together coordinate Mg(2+). Asp-74 serves as the catalytic Proton acceptor. Substrate contacts are provided by residues Ser-75, 163 to 166, Lys-186, and 199 to 200; these read FGYD and HR.

This sequence belongs to the HAM1 NTPase family. As to quaternary structure, homodimer. Requires Mg(2+) as cofactor.

It catalyses the reaction XTP + H2O = XMP + diphosphate + H(+). The catalysed reaction is dITP + H2O = dIMP + diphosphate + H(+). It carries out the reaction ITP + H2O = IMP + diphosphate + H(+). In terms of biological role, pyrophosphatase that catalyzes the hydrolysis of nucleoside triphosphates to their monophosphate derivatives, with a high preference for the non-canonical purine nucleotides XTP (xanthosine triphosphate), dITP (deoxyinosine triphosphate) and ITP. Seems to function as a house-cleaning enzyme that removes non-canonical purine nucleotides from the nucleotide pool, thus preventing their incorporation into DNA/RNA and avoiding chromosomal lesions. The polypeptide is dITP/XTP pyrophosphatase (Rhizobium meliloti (strain 1021) (Ensifer meliloti)).